The primary structure comprises 295 residues: Forkhead box protein N5 (295 aa).

The segment at S119–N146 is disordered. The segment at residues R178–L275 is a DNA-binding region (fork-head).

Ubiquitously expressed in early cleavage stage and gastrula stage embryos.

It is found in the nucleus. This is Forkhead box protein N5 from Xenopus laevis (African clawed frog).